The primary structure comprises 525 residues: GMP synthase [glutamine-hydrolyzing] (525 aa).

Positions 9–207 constitute a Glutamine amidotransferase type-1 domain; it reads RILILDFGSQ…VLGICGCEAL (199 aa). The active-site Nucleophile is C86. Residues H181 and E183 contribute to the active site. The GMPS ATP-PPase domain maps to 208 to 400; that stretch reads WTSATIIEDA…LGLPYDMLYR (193 aa). ATP is bound at residue 235–241; sequence SGGVDSS.

As to quaternary structure, homodimer.

The catalysed reaction is XMP + L-glutamine + ATP + H2O = GMP + L-glutamate + AMP + diphosphate + 2 H(+). It participates in purine metabolism; GMP biosynthesis; GMP from XMP (L-Gln route): step 1/1. Its function is as follows. Catalyzes the synthesis of GMP from XMP. In Yersinia pestis bv. Antiqua (strain Antiqua), this protein is GMP synthase [glutamine-hydrolyzing].